Here is a 362-residue protein sequence, read N- to C-terminus: 3-dehydroquinate synthase (362 aa).

NAD(+)-binding positions include 71–76 (DGEQYK), 105–109 (GVVGD), 129–130 (TT), K142, K151, and 169–172 (CLKT). 3 residues coordinate Zn(2+): E184, H247, and H264.

The protein belongs to the sugar phosphate cyclases superfamily. Dehydroquinate synthase family. Co(2+) is required as a cofactor. Requires Zn(2+) as cofactor. It depends on NAD(+) as a cofactor.

Its subcellular location is the cytoplasm. The enzyme catalyses 7-phospho-2-dehydro-3-deoxy-D-arabino-heptonate = 3-dehydroquinate + phosphate. It participates in metabolic intermediate biosynthesis; chorismate biosynthesis; chorismate from D-erythrose 4-phosphate and phosphoenolpyruvate: step 2/7. In terms of biological role, catalyzes the conversion of 3-deoxy-D-arabino-heptulosonate 7-phosphate (DAHP) to dehydroquinate (DHQ). In Escherichia coli O127:H6 (strain E2348/69 / EPEC), this protein is 3-dehydroquinate synthase.